A 436-amino-acid chain; its full sequence is ATP-dependent RNA helicase RhlB (436 aa).

The short motif at 9–37 is the Q motif element; it reads QKFADLDLLPQVIEGLEKKGFDYCTPIQA. The region spanning 40 to 219 is the Helicase ATP-binding domain; sequence LPVLLTGQDI…FEHMHNPEHV (180 aa). 53-60 is an ATP binding site; the sequence is AQTGTGKT. Positions 165 to 168 match the DEAD box motif; the sequence is DEAD. Positions 245–390 constitute a Helicase C-terminal domain; the sequence is ALLQTLIEEE…MSDYDASALL (146 aa). The disordered stretch occupies residues 398–436; it reads RLRTRNPQQRRSNNNGPRNGNRKPNQNRRPRQPRHNKEA. A compositionally biased stretch (low complexity) spans 402–421; it reads RNPQQRRSNNNGPRNGNRKP. Positions 422–436 are enriched in basic residues; the sequence is NQNRRPRQPRHNKEA.

It belongs to the DEAD box helicase family. RhlB subfamily. In terms of assembly, component of the RNA degradosome, which is a multiprotein complex involved in RNA processing and mRNA degradation.

Its subcellular location is the cytoplasm. The enzyme catalyses ATP + H2O = ADP + phosphate + H(+). Its function is as follows. DEAD-box RNA helicase involved in RNA degradation. Has RNA-dependent ATPase activity and unwinds double-stranded RNA. This is ATP-dependent RNA helicase RhlB from Vibrio atlanticus (strain LGP32) (Vibrio splendidus (strain Mel32)).